Consider the following 698-residue polypeptide: Polyphosphate kinase (698 aa).

Asn63 contributes to the ATP binding site. Residues Arg390 and Arg420 each coordinate Mg(2+). His450 functions as the Phosphohistidine intermediate in the catalytic mechanism. The ATP site is built by Tyr483, Arg579, and His607.

The protein belongs to the polyphosphate kinase 1 (PPK1) family. The cofactor is Mg(2+). Post-translationally, an intermediate of this reaction is the autophosphorylated ppk in which a phosphate is covalently linked to a histidine residue through a N-P bond.

It carries out the reaction [phosphate](n) + ATP = [phosphate](n+1) + ADP. In terms of biological role, catalyzes the reversible transfer of the terminal phosphate of ATP to form a long-chain polyphosphate (polyP). The polypeptide is Polyphosphate kinase (Xylella fastidiosa (strain Temecula1 / ATCC 700964)).